The sequence spans 178 residues: Large ribosomal subunit protein eL20x (178 aa).

This sequence belongs to the eukaryotic ribosomal protein eL20 family.

The polypeptide is Large ribosomal subunit protein eL20x (RPL18AC) (Arabidopsis thaliana (Mouse-ear cress)).